A 91-amino-acid polypeptide reads, in one-letter code: Small ribosomal subunit protein bS18 (91 aa).

The protein belongs to the bacterial ribosomal protein bS18 family. In terms of assembly, part of the 30S ribosomal subunit. Forms a tight heterodimer with protein bS6.

In terms of biological role, binds as a heterodimer with protein bS6 to the central domain of the 16S rRNA, where it helps stabilize the platform of the 30S subunit. The sequence is that of Small ribosomal subunit protein bS18 from Burkholderia multivorans (strain ATCC 17616 / 249).